The primary structure comprises 345 residues: MIILGFESSCDETGVAAVCTQRGLLAHALHSQIAMHQEYGGVVPELASRDHIRRIVPLTREVLAQAGLRREDVGAVAYTAGPGLAGALLVGASVAQSLAWSLGLPAIAIHHLEGHLLSPLLADPRPEFPFVALLVSGGHTQLMRVDGVGRYVLLGETLDDAAGEAFDKSAKLMGLGYPGGPALSRLAEQGDASRFDLPRPMLHSGDLDFSFSGLKTAVLTRVKAATREGALDEQARADLAAATQAAIIEVLAAKSICALKQTGLKRLVVAGGVGANSLLRQRLAEVLPRMKATAYFPPLSLCTDNGAMIAFAAAERVKAGLANLEQGDHAFTVRPRWDLAELERG.

Fe cation-binding residues include H111 and H115. Substrate-binding positions include 134–138 (LVSGG), D167, G180, and N276. D304 serves as a coordination point for Fe cation.

The protein belongs to the KAE1 / TsaD family. Fe(2+) serves as cofactor.

Its subcellular location is the cytoplasm. The catalysed reaction is L-threonylcarbamoyladenylate + adenosine(37) in tRNA = N(6)-L-threonylcarbamoyladenosine(37) in tRNA + AMP + H(+). Its function is as follows. Required for the formation of a threonylcarbamoyl group on adenosine at position 37 (t(6)A37) in tRNAs that read codons beginning with adenine. Is involved in the transfer of the threonylcarbamoyl moiety of threonylcarbamoyl-AMP (TC-AMP) to the N6 group of A37, together with TsaE and TsaB. TsaD likely plays a direct catalytic role in this reaction. The sequence is that of tRNA N6-adenosine threonylcarbamoyltransferase from Bordetella avium (strain 197N).